The sequence spans 297 residues: Large ribosomal subunit protein uL15m (297 aa).

The N-terminal 21 residues, 1–21 (MSGNGVHGVHGALQLLRSLPK), are a transit peptide targeting the mitochondrion. The tract at residues 23–69 (SLANLRPNPGSKKPERRRGRGRYRGRKCGRGHKGERQRGNRPRLGFE) is disordered. The segment covering 36–53 (PERRRGRGRYRGRKCGRG) has biased composition (basic residues).

The protein belongs to the universal ribosomal protein uL15 family. Component of the mitochondrial ribosome large subunit (39S) which comprises a 16S rRNA and about 50 distinct proteins.

Its subcellular location is the mitochondrion. The protein is Large ribosomal subunit protein uL15m (MRPL15) of Gallus gallus (Chicken).